Here is a 438-residue protein sequence, read N- to C-terminus: Xylose isomerase (438 aa).

Residues His100 and Asp103 contribute to the active site. The Mg(2+) site is built by Glu231, Glu267, His270, Asp295, Asp306, Asp308, and Asp338.

The protein belongs to the xylose isomerase family. As to quaternary structure, homotetramer. It depends on Mg(2+) as a cofactor.

The protein resides in the cytoplasm. It carries out the reaction alpha-D-xylose = alpha-D-xylulofuranose. This chain is Xylose isomerase, found in Pseudomonas savastanoi pv. phaseolicola (strain 1448A / Race 6) (Pseudomonas syringae pv. phaseolicola (strain 1448A / Race 6)).